The chain runs to 386 residues: Lipid-A-disaccharide synthase (386 aa).

Belongs to the LpxB family.

It carries out the reaction a lipid X + a UDP-2-N,3-O-bis[(3R)-3-hydroxyacyl]-alpha-D-glucosamine = a lipid A disaccharide + UDP + H(+). It participates in bacterial outer membrane biogenesis; LPS lipid A biosynthesis. Functionally, condensation of UDP-2,3-diacylglucosamine and 2,3-diacylglucosamine-1-phosphate to form lipid A disaccharide, a precursor of lipid A, a phosphorylated glycolipid that anchors the lipopolysaccharide to the outer membrane of the cell. This is Lipid-A-disaccharide synthase from Chromobacterium violaceum (strain ATCC 12472 / DSM 30191 / JCM 1249 / CCUG 213 / NBRC 12614 / NCIMB 9131 / NCTC 9757 / MK).